The chain runs to 104 residues: Large ribosomal subunit protein uL24 (104 aa).

It belongs to the universal ribosomal protein uL24 family. Part of the 50S ribosomal subunit.

In terms of biological role, one of two assembly initiator proteins, it binds directly to the 5'-end of the 23S rRNA, where it nucleates assembly of the 50S subunit. Its function is as follows. One of the proteins that surrounds the polypeptide exit tunnel on the outside of the subunit. In Herminiimonas arsenicoxydans, this protein is Large ribosomal subunit protein uL24.